The following is a 688-amino-acid chain: NADPH-dependent diflavin oxidoreductase 1 (688 aa).

The disordered stretch occupies residues 26-76; sequence HLHRHADTSPTNQHNTSHKMTTTEPIHVTTGSGESRDHTEPRHVTPTSPNA. The span at 33 to 58 shows a compositional bias: polar residues; it reads TSPTNQHNTSHKMTTTEPIHVTTGSG. Residues 59 to 68 show a composition bias toward basic and acidic residues; sequence ESRDHTEPRH. The region spanning 82-227 is the Flavodoxin-like domain; it reads ITIAYATETG…MYNEWQARFC (146 aa). Residues 88–93, 136–139, 174–183, and aspartate 209 each bind FMN; these read TETGNA, STTG, and LGDSSYPRFN. One can recognise an FAD-binding FR-type domain in the interval 277 to 543; sequence KDVLQGTVVG…KHSTPIPDLD (267 aa). Residues arginine 453, 483–486, and 515–518 each bind FAD; these read RLFS and GVLT. NADP(+) contacts are provided by residues threonine 554, 607–608, and 613–617; these read SR and GGYVQ. Tryptophan 688 is an FAD binding site.

The protein belongs to the NADPH-dependent diflavin oxidoreductase NDOR1 family. It in the N-terminal section; belongs to the flavodoxin family. In the C-terminal section; belongs to the flavoprotein pyridine nucleotide cytochrome reductase family. Interacts with DRE2; as part of the cytosolic iron-sulfur (Fe-S) protein assembly (CIA) machinery. It depends on FAD as a cofactor. FMN is required as a cofactor.

It localises to the cytoplasm. The protein resides in the mitochondrion. It carries out the reaction 2 oxidized [2Fe-2S]-[protein] + NADPH = 2 reduced [2Fe-2S]-[protein] + NADP(+) + H(+). NADPH-dependent reductase which is a central component of the cytosolic iron-sulfur (Fe-S) protein assembly (CIA) machinery. Transfers electrons from NADPH via its FAD and FMN prosthetic groups to the [2Fe-2S] cluster of DRE2, another key component of the CIA machinery. In turn, this reduced cluster provides electrons for assembly of cytosolic iron-sulfur cluster proteins. Positively controls H(2)O(2)-induced cell death. The chain is NADPH-dependent diflavin oxidoreductase 1 from Yarrowia lipolytica (strain CLIB 122 / E 150) (Yeast).